A 104-amino-acid polypeptide reads, in one-letter code: uncharacterized protein (104 aa).

Basic and acidic residues predominate over residues 58–71 (PERDRARRDRDHHP). The tract at residues 58–84 (PERDRARRDRDHHPWSRSRSQLSPRMA) is disordered.

This is an uncharacterized protein from Mycobacterium tuberculosis (strain ATCC 25618 / H37Rv).